We begin with the raw amino-acid sequence, 344 residues long: UDP-N-acetylenolpyruvoylglucosamine reductase (344 aa).

An FAD-binding PCMH-type domain is found at 19-189 (INVTAKKIIF…IAVGIKIKKN (171 aa)). Residue arginine 165 is part of the active site. Serine 235 (proton donor) is an active-site residue. Glutamate 331 is an active-site residue.

This sequence belongs to the MurB family. It depends on FAD as a cofactor.

It is found in the cytoplasm. The catalysed reaction is UDP-N-acetyl-alpha-D-muramate + NADP(+) = UDP-N-acetyl-3-O-(1-carboxyvinyl)-alpha-D-glucosamine + NADPH + H(+). It functions in the pathway cell wall biogenesis; peptidoglycan biosynthesis. In terms of biological role, cell wall formation. This is UDP-N-acetylenolpyruvoylglucosamine reductase from Buchnera aphidicola subsp. Schizaphis graminum (strain Sg).